The chain runs to 187 residues: Intraflagellar transport protein 22 homolog (187 aa).

GTP is bound by residues 10 to 17, 65 to 69, and 125 to 128; these read GPSECGKT, DCAGD, and HKPG.

The protein belongs to the small GTPase superfamily. Rab family.

This is Intraflagellar transport protein 22 homolog (ift22) from Danio rerio (Zebrafish).